Reading from the N-terminus, the 421-residue chain is UPF0415 protein C7orf25 (421 aa).

This sequence belongs to the UPF0415 family.

The sequence is that of UPF0415 protein C7orf25 (C7orf25) from Homo sapiens (Human).